The chain runs to 426 residues: MNAQHIAETLHALGSQAKAASALMARAPSAVKNRALLALARRLRDNTTALQADNARDLERARAAGLAEPMVDRLKLTPKVLETCALGCEQLATMGDVIGEISGMRQQPSGIRVGQMRVPIGVFGMIYESRPNVTIEAASLSIKSGNACILRGGSEAIDSNRALARLVQEALEEAGLPGDAVQLVQTTDREAVGHLIAMPQYVDVIIPRGGKGLIERISRDAKVPVIKHLDGNCHTYVDDPCDVAMAVKVADNAKTQKYSPCNASEGLLVARGVAAEFLPRIGAVYAAKGVEMRGCPETLALLAGVPGATLVHATEQDWSEEYLAPIISIKVVEGLDEAIAHINRYGSHHTDAILTRDHMHAQRFLREVDSASVMVNASTRFADGFEYGLGAEIGISTDKFHARGPVGIEGLTSLKWVVLGEGDIRA.

This sequence belongs to the gamma-glutamyl phosphate reductase family.

It localises to the cytoplasm. The enzyme catalyses L-glutamate 5-semialdehyde + phosphate + NADP(+) = L-glutamyl 5-phosphate + NADPH + H(+). It participates in amino-acid biosynthesis; L-proline biosynthesis; L-glutamate 5-semialdehyde from L-glutamate: step 2/2. Catalyzes the NADPH-dependent reduction of L-glutamate 5-phosphate into L-glutamate 5-semialdehyde and phosphate. The product spontaneously undergoes cyclization to form 1-pyrroline-5-carboxylate. This chain is Gamma-glutamyl phosphate reductase, found in Paracidovorax citrulli (strain AAC00-1) (Acidovorax citrulli).